We begin with the raw amino-acid sequence, 257 residues long: MSYHTIRYEISEGLAVITLDRPEVMNALNAAMRHELTAALHRARGEARAIVLTGSGRAFCSGQDLGDGAAEGLNLETVLREEYEPLLQAIYSCPLPVLAAVNGAAAGAGANLALAADVVIAAQSAAFMQAFTRIGLMPDAGGTWWLPRQVGMARAMGMALFAEKIGAEEAARMGLIWEAVPDVDFEHHWRARAAHLARGPSAAFAAVKKAFHAGLSNPLPAQLALEARLQGELGQSADFREGVQAFLEKRPPHFTGR.

The protein belongs to the enoyl-CoA hydratase/isomerase family.

It carries out the reaction a (3S)-3-hydroxyacyl-CoA = a (2E)-enoyl-CoA + H2O. It catalyses the reaction a 4-saturated-(3S)-3-hydroxyacyl-CoA = a (3E)-enoyl-CoA + H2O. Could possibly oxidize fatty acids using specific components. This is Probable enoyl-CoA hydratase (fadB1) from Rhodobacter capsulatus (strain ATCC BAA-309 / NBRC 16581 / SB1003).